The chain runs to 1143 residues: AP-3 complex subunit delta (1143 aa).

8 HEAT repeats span residues 129–166, 167–203, 205–242, 245–279, 280–317, 318–354, 356–389, and 416–455; these read DLARELANDILTLLSTQKTHILKRAITVLYKIFLRYPE, SLRPAFPKLREKLDDPEPSVVSCSVNVICELARRNPK, YLPLAPVLFRILTNTTNNYWMLIKIVKLFAALTPHEPR, KKLIDPLTNIINSSPSVSLLYECIQTCITGMSDHI, PLMKLCISKLRTLIEHNDQNLKYLGLLALNNIMKIHPK, AVSEHRDLVLNCLEDDDISIRLRALDLLPGMTSKKNI, DIVFKLLDHLDNAEGQYKEQIIEKIIELCSMGTY, and LIASQLLDVVIRVKIVRAYSTRQMIELLKNPKLMSNPTEG. 5 disordered regions span residues 520 to 541, 634 to 692, 704 to 728, 741 to 792, and 829 to 899; these read KIPSLDDDDEEEEAQEEEDQNE, QEPI…RHPI, KQANNPYMLGGKVSKKLSTNDPENI, HVGA…NDAL, and KKNA…QAAA. The segment covering 524–540 has biased composition (acidic residues); the sequence is LDDDDEEEEAQEEEDQN. Residues 526-550 adopt a coiled-coil conformation; that stretch reads DDDEEEEAQEEEDQNEITHEIVQEC. Basic residues predominate over residues 653-662; that stretch reads HQKKHHKHHR. Over residues 666-675 the composition is skewed to acidic residues; the sequence is DGDDDEDDET. Residues 814–835 adopt a coiled-coil conformation; it reads TDIIKEKEREMAMLAKKNAKLS. The span at 840 to 849 shows a compositional bias: polar residues; sequence PSTANYSEVT. 2 stretches are compositionally biased toward low complexity: residues 854–867 and 881–899; these read APAKKATKKAAAGS and KPAATSSTTTTTKSTQAAA. A GAE domain is found at 914 to 1016; it reads KTILDDDNFK…FTLLASPSSS (103 aa).

Belongs to the adaptor complexes large subunit family. Adaptor protein complex 3 (AP-3) is a heterotetramer composed of two large adaptins (delta-type subunit and beta-type subunit), a medium adaptin (mu-type subunit) and a small adaptin (sigma-type subunit).

It is found in the endosome membrane. Part of the AP-3 complex, an adaptor-related complex which is essential for the compartmentalization of the endocytic pathway. The sequence is that of AP-3 complex subunit delta (ap3d1) from Dictyostelium discoideum (Social amoeba).